The chain runs to 144 residues: Nucleoside diphosphate kinase (144 aa).

Positions 11, 59, 87, 93, 104, and 114 each coordinate ATP. His117 serves as the catalytic Pros-phosphohistidine intermediate.

The protein belongs to the NDK family. In terms of assembly, homotetramer. It depends on Mg(2+) as a cofactor.

It is found in the cytoplasm. The enzyme catalyses a 2'-deoxyribonucleoside 5'-diphosphate + ATP = a 2'-deoxyribonucleoside 5'-triphosphate + ADP. It carries out the reaction a ribonucleoside 5'-diphosphate + ATP = a ribonucleoside 5'-triphosphate + ADP. In terms of biological role, major role in the synthesis of nucleoside triphosphates other than ATP. The ATP gamma phosphate is transferred to the NDP beta phosphate via a ping-pong mechanism, using a phosphorylated active-site intermediate. The chain is Nucleoside diphosphate kinase from Sorangium cellulosum (strain So ce56) (Polyangium cellulosum (strain So ce56)).